The chain runs to 246 residues: Envelope glycoprotein L (246 aa).

The first 19 residues, 1–19 (MKTNIFFIFLISILNQIYA), serve as a signal peptide directing secretion. Residues 29 to 235 (LEQECIKNIL…EKYNEVLPFR (207 aa)) form the gL betaherpesvirus-type domain. A disulfide bridge connects residues Cys-134 and Cys-139.

The protein belongs to the herpesviridae glycoprotein L (gL) family. Betaherpesvirinae gL subfamily. As to quaternary structure, interacts with glycoprotein H (gH); this interaction is necessary for the correct processing and cell surface expression of gH.

The protein localises to the virion membrane. The protein resides in the host cell membrane. Its subcellular location is the host Golgi apparatus. It localises to the host trans-Golgi network. Functionally, the heterodimer glycoprotein H-glycoprotein L is required for the fusion of viral and plasma membranes leading to virus entry into the host cell. Acts as a functional inhibitor of gH and maintains gH in an inhibited form. Upon binding to host integrins, gL dissociates from gH leading to activation of the viral fusion glycoproteins gB and gH. The chain is Envelope glycoprotein L from Homo sapiens (Human).